Here is a 34-residue protein sequence, read N- to C-terminus: Phalloidin proprotein (34 aa).

The propeptide occupies 1-10 (MSDINASRLP). The segment at residues 11-17 (AWLATCP) is a cross-link (cyclopeptide (Ala-Pro)). Residues 12 to 16 (WLATC) constitute a cross-link (2'-cysteinyl-6'-hydroxytryptophan sulfoxide (Trp-Cys)). Positions 18–34 (CVGDDVNPTLSRGESLC) are excised as a propeptide.

It belongs to the MSDIN fungal toxin family. Processed by the macrocyclase-peptidase enzyme POPB to yield a toxic cyclic heptapeptide. POPB first removes 10 residues from the N-terminus. Conformational trapping of the remaining peptide forces the enzyme to release this intermediate rather than proceed to macrocyclization. The enzyme rebinds the remaining peptide in a different conformation and catalyzes macrocyclization of the N-terminal 7 residues.

Its function is as follows. Toxin that belongs to the bicyclic heptapeptides called phallotoxins. Although structurally related to amatoxins, phallotoxins have a different mode of action, which is the stabilization of F-actin. Phallotoxins are poisonous when administered parenterally, but not orally because of poor absorption. The chain is Phalloidin proprotein from Amanita phalloides (Death cap).